A 186-amino-acid chain; its full sequence is ADP-ribosylation factor-like protein 8B (186 aa).

Met-1 is subject to N-acetylmethionine. The segment at residues 1–19 (MLALISRLLDWFRSLFWKE) is an intramembrane region (note=Mediates targeting to membranes). GTP is bound by residues 29–35 (QYSGKTT), 71–75 (DIGGQ), and 130–133 (NKRD). Lys-141 participates in a covalent cross-link: Glycyl lysine isopeptide (Lys-Gly) (interchain with G-Cter in ubiquitin).

The protein belongs to the small GTPase superfamily. Arf family. In terms of assembly, interacts with tubulin. Interacts with BORCS5; recruits ARL8B to lysosomes. Interacts with VPS41; the interaction mediates the recruitment of the HOPS complex to lysosomes. Interacts (GTP-bound form) with PLEKHM2 (via RUN domain); the interaction is required to recruit the motor protein kinesin-1 on lysosomes. Interacts (GTP-bound form) with PLEKHM1 (via RUN domain); the interaction is required for PLEKHM1 localization to lysosomes and for ARL8B function in delivery and degradation of endocytic and autophagic cargo in lysosomes. PLEKHM1 and PLEKHM2 compete for interaction with ARL8B. Interacts (GTP-bound form) with RUFY1; the interaction is required for RUFY1 endosomal location. When GTP-bound, interacts with RUFY3 and RUFY4, but not with RUFY1, nor RUFY2. Ubiquitinated at Lys-141 by RNF167, leading to its degradation. As to expression, ubiquitously expressed.

It is found in the late endosome membrane. It localises to the lysosome membrane. Its subcellular location is the cytoplasm. The protein resides in the cytoskeleton. The protein localises to the spindle. It is found in the cell projection. It localises to the axon. Its subcellular location is the synapse. The protein resides in the cytolytic granule membrane. The protein localises to the early endosome membrane. It carries out the reaction GTP + H2O = GDP + phosphate + H(+). Functionally, small GTPase which cycles between active GTP-bound and inactive GDP-bound states. In its active state, binds to a variety of effector proteins playing a key role in the regulation of lysosomal positioning which is important for nutrient sensing, natural killer cell-mediated cytotoxicity and antigen presentation. Along with its effectors, orchestrates lysosomal transport and fusion. Localizes specifically to lysosomal membranes and mediates anterograde lysosomal motility by recruiting PLEKHM2, which in turn recruits the motor protein kinesin-1 on lysosomes. Required for lysosomal and cytolytic granule exocytosis. Critical factor involved in NK cell-mediated cytotoxicity. Drives the polarization of cytolytic granules and microtubule-organizing centers (MTOCs) toward the immune synapse between effector NK lymphocytes and target cells. In neurons, mediates the anterograde axonal long-range transport of presynaptic lysosome-related vesicles required for presynaptic biogenesis and synaptic function. Also acts as a regulator of endosome to lysosome trafficking pathways of special significance for host defense. Recruits RUFY1 onto early endosomes regulating endosomes to trans-Golgi network proteins retrieval. Regulates cargo trafficking to lysosomes by binding to PLEKHM1 and recruiting the HOPS subunit VPS41, resulting in functional assembly of the HOPS complex on lysosomal membranes. Plays an important role in cargo delivery to lysosomes for antigen presentation and microbial killing. Directs the intersection of CD1d with lipid antigens in lysosomes, and plays a role in intersecting phagosomes with lysosomes to generate phagolysosomes that kill microbes. Involved in the process of MHC II presentation. Regulates the delivery of antigens to lysosomes and the formation of MHC II-peptide complexes through the recruitment of the HOPS complex to lysosomes allowing the fusion of late endosomes to lysosomes. May play a role in chromosome segregation. Its function is as follows. (Microbial infection) During Mycobacterium tuberculosis (Mtb) infection, is required for plasma membrane repair by controlling the exocytosis of lysosomes in macrophages. ARL8B secretion pathway is crucial to control the type of cell death of the M.tuberculosis-infected macrophages, distinguishing avirulent from virulent Mtb induced necrotic cell death. (Microbial infection) During infection, coronaviruses such as SARS-CoV-2 and the chaperone HSPA5/GRP78 are probably co-released through ARL8B-dependent lysosomal exocytic pathway for unconventional egress. The protein is ADP-ribosylation factor-like protein 8B of Homo sapiens (Human).